The chain runs to 91 residues: Acyl-CoA-binding domain-containing protein 1 (91 aa).

An ACB domain is found at 3-88 (LQEDFEQYAE…VKQLLEEAAA (86 aa)). An acyl-CoA is bound by residues lysine 15, 30–34 (YGLYK), lysine 56, and tyrosine 75.

This sequence belongs to the ACBP family. As to expression, highly expressed in leaves. Expressed at low levels in roots and seeds.

It is found in the cytoplasm. The protein localises to the cytosol. In terms of biological role, binds medium- and long-chain acyl-CoA esters with high affinity. Can interact in vitro with palmitoyl-CoA, oleoyl-CoA, linoleoyl-CoA and linolenoyl-CoA. Binds phosphatidic acid (PA) and phosphatidylcholine (PC) in vitro. May play a role in the biosynthesis of phospholipids. The sequence is that of Acyl-CoA-binding domain-containing protein 1 from Oryza sativa subsp. japonica (Rice).